Here is a 289-residue protein sequence, read N- to C-terminus: Rhodopsin (289 aa).

At 1–7 the chain is on the extracellular side; it reads YLVNPAG. Residues 8–32 form a helical membrane-spanning segment; that stretch reads YAALGAYMFLLILIGSPVNFLTLYV. The Cytoplasmic segment spans residues 33 to 44; the sequence is TLEHKKLRTPLN. A helical transmembrane segment spans residues 45-67; the sequence is YILLNLAVADLFMVLGGFTTTMY. Topologically, residues 68–81 are extracellular; that stretch reads TSMHGYSVLGRLGC. Cys-81 and Cys-158 form a disulfide bridge. The helical transmembrane segment at 82-104 threads the bilayer; the sequence is ILEGFFATLGGEIALWSLVVLAI. Positions 105–107 match the 'Ionic lock' involved in activated form stabilization motif; sequence ERW. At 105–123 the chain is on the cytoplasmic side; that stretch reads ERWIVVCKPISNFRFTEDH. The helical transmembrane segment at 124–144 threads the bilayer; that stretch reads AIMGLAFSWVMALACAVPPLV. The Extracellular segment spans residues 145-173; it reads GWSRYIPEGMQCSCGVDYYTRAEGFNNES. A glycan (N-linked (GlcNAc...) asparagine) is linked at Asn-171. The helical transmembrane segment at 174-195 threads the bilayer; the sequence is FVIYMFIVHFLIPLSVIFFCYG. The Cytoplasmic segment spans residues 196 to 223; sequence RLLCAVKEAAAAQQESETTQRPEKEVTR. A helical transmembrane segment spans residues 224–245; sequence MVVIMVIAFLVCCLPNASVAWW. At 246-257 the chain is on the extracellular side; that stretch reads IFCNQGSDFGPI. A helical membrane pass occupies residues 258–279; it reads FMTLPSFFAKSAAIYNPMIYIC. Lys-267 is modified (N6-(retinylidene)lysine). At 280 to 289 the chain is on the cytoplasmic side; it reads MNKQFRHCMI.

The protein belongs to the G-protein coupled receptor 1 family. Opsin subfamily. In terms of processing, phosphorylated on some or all of the serine and threonine residues present in the C-terminal region. Post-translationally, contains one covalently linked retinal chromophore.

The protein resides in the membrane. It is found in the cell projection. Its subcellular location is the cilium. The protein localises to the photoreceptor outer segment. In terms of biological role, photoreceptor required for image-forming vision at low light intensity. While most salt water fish species use retinal as chromophore, most freshwater fish use 3-dehydroretinal, or a mixture of retinal and 3-dehydroretinal. Light-induced isomerization of 11-cis to all-trans retinal triggers a conformational change that activates signaling via G-proteins. Subsequent receptor phosphorylation mediates displacement of the bound G-protein alpha subunit by arrestin and terminates signaling. The chain is Rhodopsin (rho) from Limnocottus bergianus.